Reading from the N-terminus, the 639-residue chain is Tetracycline resistance protein TetW (639 aa).

The tr-type G domain occupies 1–243; it reads MKIINIGILA…VTGLFQPIGE (243 aa). GTP-binding positions include 10–17, 74–78, and 128–131; these read AHVDAGKT, DTPGH, and NKID.

Belongs to the TRAFAC class translation factor GTPase superfamily. Classic translation factor GTPase family. TetM/TetO subfamily.

Abolishes the inhibitory effect of tetracyclin on protein synthesis by a non-covalent modification of the ribosomes. In Butyrivibrio fibrisolvens, this protein is Tetracycline resistance protein TetW (tetW).